Here is a 211-residue protein sequence, read N- to C-terminus: Protein-L-isoaspartate O-methyltransferase (211 aa).

The active site involves serine 60.

It belongs to the methyltransferase superfamily. L-isoaspartyl/D-aspartyl protein methyltransferase family.

Its subcellular location is the cytoplasm. It carries out the reaction [protein]-L-isoaspartate + S-adenosyl-L-methionine = [protein]-L-isoaspartate alpha-methyl ester + S-adenosyl-L-homocysteine. Its function is as follows. Catalyzes the methyl esterification of L-isoaspartyl residues in peptides and proteins that result from spontaneous decomposition of normal L-aspartyl and L-asparaginyl residues. It plays a role in the repair and/or degradation of damaged proteins. The sequence is that of Protein-L-isoaspartate O-methyltransferase from Pseudomonas fluorescens (strain SBW25).